Reading from the N-terminus, the 332-residue chain is Large ribosomal subunit protein mL44 (332 aa).

A mitochondrion-targeting transit peptide spans 1–30 (MASGLVRLLQQGHRCLLAPVAPKLVPPVRG). An RNase III domain is found at 86 to 228 (DLLKTAFVNS…LITQMTGKEL (143 aa)). Residues 236-306 (NPMGLLVEEL…ARVALRKLYG (71 aa)) enclose the DRBM domain.

It belongs to the ribonuclease III family. Mitochondrion-specific ribosomal protein mL44 subfamily. As to quaternary structure, component of the mitochondrial large ribosomal subunit (mt-LSU). Mature mammalian 55S mitochondrial ribosomes consist of a small (28S) and a large (39S) subunit. The 28S small subunit contains a 12S ribosomal RNA (12S mt-rRNA) and 30 different proteins. The 39S large subunit contains a 16S rRNA (16S mt-rRNA), a copy of mitochondrial valine transfer RNA (mt-tRNA(Val)), which plays an integral structural role, and 52 different proteins.

The protein resides in the mitochondrion. Functionally, component of the 39S subunit of mitochondrial ribosome. May have a function in the assembly/stability of nascent mitochondrial polypeptides exiting the ribosome. This chain is Large ribosomal subunit protein mL44 (MRPL44), found in Homo sapiens (Human).